A 431-amino-acid chain; its full sequence is Argininosuccinate lyase (431 aa).

It belongs to the lyase 1 family. Argininosuccinate lyase subfamily.

Its subcellular location is the cytoplasm. The catalysed reaction is 2-(N(omega)-L-arginino)succinate = fumarate + L-arginine. The protein operates within amino-acid biosynthesis; L-arginine biosynthesis; L-arginine from L-ornithine and carbamoyl phosphate: step 3/3. The sequence is that of Argininosuccinate lyase from Xanthomonas oryzae pv. oryzae (strain MAFF 311018).